A 678-amino-acid polypeptide reads, in one-letter code: ATP-dependent RNA helicase DHX58 (678 aa).

The Helicase ATP-binding domain occupies 11–188; sequence IMPALEGKNI…DGAINHVLQL (178 aa). 24-31 contributes to the ATP binding site; it reads LPTGAGKT. A DECH box motif is present at residues 131–134; sequence DECH. The Helicase C-terminal domain maps to 350–514; that stretch reads KLEMLEKILQ…QAVAAVQKMD (165 aa). Residues 489-546 are a coiled coil; sequence ELKRELINEALETLMEQAVAAVQKMDQAEYQAKIRDLQQAALTKRAAQAAQRENQRQQ. One can recognise an RLR CTR domain in the interval 539-669; it reads QRENQRQQFP…PDFDFLQHCA (131 aa). Residues cysteine 556, cysteine 559, cysteine 612, and cysteine 615 each coordinate Zn(2+). Residues 572-655 are RNA-binding; that stretch reads VEGTHHVNVN…RIQAKKWSRV (84 aa).

This sequence belongs to the helicase family. RLR subfamily. In terms of assembly, monomer in the absence of dsRNA. Homodimer in the presence of dsRNA. Interacts with RIGI (via CARD domain), MAVS/IPS1 and DDX60. Found in a complex with RIGI and IFIH1/MDA5. Interacts with ANKRD17. Directly interacts with ATG5 and ATG12, either as ATG5 and ATG12 monomers or as ATG12-ATG5 conjugates. As to quaternary structure, (Microbial infection) Interacts (via helicase C-terminal domain) with non-structural protein V of paramyxoviruses including human parainfluenza 2 virus, human parainfluenza 5 virus, measles virus, mumps virus, hendra virus and nipah virus. Expressed in testis, nerve and spleen. Also expressed in the brain.

It localises to the cytoplasm. It carries out the reaction ATP + H2O = ADP + phosphate + H(+). Acts as a regulator of RIGI and IFIH1/MDA5 mediated antiviral signaling. Cannot initiate antiviral signaling as it lacks the CARD domain required for activating MAVS/IPS1-dependent signaling events. Can have both negative and positive regulatory functions related to RIGI and IFIH1/MDA5 signaling and this role in regulating signaling may be complex and could probably depend on characteristics of the infecting virus or target cells, or both. Its inhibitory action on RIG-I signaling may involve the following mechanisms: competition with RIGI for binding to the viral RNA, binding to RIGI and inhibiting its dimerization and interaction with MAVS/IPS1, competing with IKBKE in its binding to MAVS/IPS1 thereby inhibiting activation of interferon regulatory factor 3 (IRF3). Its positive regulatory role may involve unwinding or stripping nucleoproteins of viral RNA thereby facilitating their recognition by RIGI and IFIH1/MDA5. Involved in the innate immune response to various RNA viruses and some DNA viruses such as poxviruses and coronavirus SARS-CoV-2, and also to the bacterial pathogen Listeria monocytogenes. Can bind both ssRNA and dsRNA, with a higher affinity for dsRNA. Shows a preference to 5'-triphosphorylated RNA, although it can recognize RNA lacking a 5'-triphosphate. The chain is ATP-dependent RNA helicase DHX58 from Homo sapiens (Human).